Here is a 118-residue protein sequence, read N- to C-terminus: Large ribosomal subunit protein bL19 (118 aa).

The protein belongs to the bacterial ribosomal protein bL19 family.

In terms of biological role, this protein is located at the 30S-50S ribosomal subunit interface and may play a role in the structure and function of the aminoacyl-tRNA binding site. The polypeptide is Large ribosomal subunit protein bL19 (Frankia casuarinae (strain DSM 45818 / CECT 9043 / HFP020203 / CcI3)).